The primary structure comprises 290 residues: Chloride intracellular channel exc-4 (290 aa).

A helical membrane pass occupies residues 37-57 (LFCQEFWMELYALYEIGVARV).

Belongs to the chloride channel CLIC family. As to quaternary structure, monomer. Expressed in the secretory system, hypodermis, vulva, pharyngeal muscle, rectal gland, tubular rectal epithelium cells, and tubular neuronal support cells in the head and tail.

Its subcellular location is the cytoplasm. It localises to the membrane. May insert into membranes and form chloride ion channels. Involved in the formation of the excretory canal. Required to prevent cystic lumenal expansions in the excretory cell. Not required for formation of the initial tube, but is required for regulating the size of the tube lumen as it grows. This chain is Chloride intracellular channel exc-4 (exc-4), found in Caenorhabditis elegans.